Reading from the N-terminus, the 224-residue chain is UPF0758 protein mma_2551 (224 aa).

An MPN domain is found at S102–L224. 3 residues coordinate Zn(2+): H173, H175, and D186. The JAMM motif signature appears at H173 to D186.

The protein belongs to the UPF0758 family.

This is UPF0758 protein mma_2551 from Janthinobacterium sp. (strain Marseille) (Minibacterium massiliensis).